The primary structure comprises 337 residues: 2-oxoglutarate-dependent dioxygenase 19 (337 aa).

A disordered region spans residues 1-25 (MVAPSRLPSHEEQSAAAAADGSATP). The 105-residue stretch at 179 to 283 (NLESCFQILV…RMSFVSLIGP (105 aa)) folds into the Fe2OG dioxygenase domain. 3 residues coordinate Fe cation: H208, D210, and H264. A 2-oxoglutarate-binding site is contributed by R274.

Belongs to the iron/ascorbate-dependent oxidoreductase family. It depends on Fe(2+) as a cofactor. L-ascorbate is required as a cofactor. As to expression, expressed in shoots.

It is found in the cytoplasm. It catalyses the reaction melatonin + 2-oxoglutarate + O2 = 2-hydroxymelatonin + succinate + CO2. In terms of biological role, involved in melatonin degradation. Catalyzes the hydroxylation of melatonin to produce 2-hydroxymelatonin. The chain is 2-oxoglutarate-dependent dioxygenase 19 from Oryza sativa subsp. japonica (Rice).